The chain runs to 356 residues: 3-isopropylmalate dehydrogenase (356 aa).

Residues arginine 95, arginine 105, arginine 133, and aspartate 223 each coordinate substrate. Mg(2+)-binding residues include aspartate 223, aspartate 247, and aspartate 251. An NAD(+)-binding site is contributed by 281-293 (GSAPDIAGQNKAN).

Belongs to the isocitrate and isopropylmalate dehydrogenases family. LeuB type 1 subfamily. Homodimer. The cofactor is Mg(2+). Requires Mn(2+) as cofactor.

It is found in the cytoplasm. The enzyme catalyses (2R,3S)-3-isopropylmalate + NAD(+) = 4-methyl-2-oxopentanoate + CO2 + NADH. It participates in amino-acid biosynthesis; L-leucine biosynthesis; L-leucine from 3-methyl-2-oxobutanoate: step 3/4. Catalyzes the oxidation of 3-carboxy-2-hydroxy-4-methylpentanoate (3-isopropylmalate) to 3-carboxy-4-methyl-2-oxopentanoate. The product decarboxylates to 4-methyl-2 oxopentanoate. The polypeptide is 3-isopropylmalate dehydrogenase (Neisseria gonorrhoeae (strain ATCC 700825 / FA 1090)).